Here is a 215-residue protein sequence, read N- to C-terminus: Protein transport protein sec22 (215 aa).

The Cytoplasmic portion of the chain corresponds to 1 to 194 (MVKSTTVTRL…RVNLEALWRQ (194 aa)). The region spanning 9-118 (RLDGLPLAAS…YAFVQFDTFM (110 aa)) is the Longin domain. The 61-residue stretch at 133–193 (NLDKLNTELK…RRVNLEALWR (61 aa)) folds into the v-SNARE coiled-coil homology domain. A helical; Anchor for type IV membrane protein transmembrane segment spans residues 195-215 (YGPVSIIALLFLIFVYWRFFA).

It belongs to the synaptobrevin family. In terms of assembly, component of two distinct SNARE complexes consisting of sed5, bos1, bet1 and sec22 or ufe1, use1, sec20 and sec22. Ykt6 can probably replace sec22 as subunit of either complex.

The protein resides in the membrane. It localises to the endoplasmic reticulum membrane. Its subcellular location is the golgi apparatus membrane. In terms of biological role, nonessential SNARE involved in targeting and fusion of ER-derived transport vesicles with the Golgi complex as well as Golgi-derived retrograde transport vesicles with the ER. This chain is Protein transport protein sec22 (sec22), found in Schizosaccharomyces pombe (strain 972 / ATCC 24843) (Fission yeast).